The chain runs to 195 residues: HTH-type transcriptional regulator BetI (195 aa).

An HTH tetR-type domain is found at 8–68; it reads PIRRRQLIDA…ATMRDITSQL (61 aa). The segment at residues 31–50 is a DNA-binding region (H-T-H motif); it reads TIAQIARRAGVSTGIISHYF.

It participates in amine and polyamine biosynthesis; betaine biosynthesis via choline pathway [regulation]. Its function is as follows. Repressor involved in the biosynthesis of the osmoprotectant glycine betaine. It represses transcription of the choline transporter BetT and the genes of BetAB involved in the synthesis of glycine betaine. This is HTH-type transcriptional regulator BetI from Klebsiella pneumoniae (strain 342).